We begin with the raw amino-acid sequence, 309 residues long: Uracil phosphoribosyltransferase homolog (309 aa).

The interval M1–G41 is disordered. The span at C13–P26 shows a compositional bias: polar residues. Residue S25 is modified to Phosphoserine. Residues R133, R142, and E176–N179 contribute to the GTP site. A 5-phospho-alpha-D-ribose 1-diphosphate-binding site is contributed by R186. R203 and R232 together coordinate GTP. Y238–T246 serves as a coordination point for 5-phospho-alpha-D-ribose 1-diphosphate. T299–F301 is a binding site for uracil.

This sequence belongs to the UPRTase family.

It localises to the cytoplasm. The protein localises to the nucleus. In Macaca fascicularis (Crab-eating macaque), this protein is Uracil phosphoribosyltransferase homolog (UPRT).